The sequence spans 509 residues: ATP synthase subunit alpha (509 aa).

169 to 176 (GDRQTGKT) provides a ligand contact to ATP.

Belongs to the ATPase alpha/beta chains family. As to quaternary structure, F-type ATPases have 2 components, CF(1) - the catalytic core - and CF(0) - the membrane proton channel. CF(1) has five subunits: alpha(3), beta(3), gamma(1), delta(1), epsilon(1). CF(0) has three main subunits: a(1), b(2) and c(9-12). The alpha and beta chains form an alternating ring which encloses part of the gamma chain. CF(1) is attached to CF(0) by a central stalk formed by the gamma and epsilon chains, while a peripheral stalk is formed by the delta and b chains.

The protein resides in the cell inner membrane. It carries out the reaction ATP + H2O + 4 H(+)(in) = ADP + phosphate + 5 H(+)(out). In terms of biological role, produces ATP from ADP in the presence of a proton gradient across the membrane. The alpha chain is a regulatory subunit. This is ATP synthase subunit alpha from Agrobacterium fabrum (strain C58 / ATCC 33970) (Agrobacterium tumefaciens (strain C58)).